A 325-amino-acid polypeptide reads, in one-letter code: Ribosomal RNA small subunit methyltransferase H (325 aa).

S-adenosyl-L-methionine contacts are provided by residues 32–34, D52, F79, D100, and Q107; that span reads GGH.

Belongs to the methyltransferase superfamily. RsmH family.

The protein resides in the cytoplasm. The enzyme catalyses cytidine(1402) in 16S rRNA + S-adenosyl-L-methionine = N(4)-methylcytidine(1402) in 16S rRNA + S-adenosyl-L-homocysteine + H(+). Its function is as follows. Specifically methylates the N4 position of cytidine in position 1402 (C1402) of 16S rRNA. The chain is Ribosomal RNA small subunit methyltransferase H from Oceanobacillus iheyensis (strain DSM 14371 / CIP 107618 / JCM 11309 / KCTC 3954 / HTE831).